The primary structure comprises 178 residues: MKKNIHILGASGVGTSTLGAALSKRLPHTHLDTDNYYWLDKFTKKREIPERRKLLEKDLTINEKWILSGAVCGWGDNLKSYFDLVVFLWIPQDIRLERLRHREFQRYGNEVLAGGSKYEQSKTFLEWASLYDNAGMEVRSRALHEHWMADLSCPVLKIEDDCSVNERVDRVLDYLSSN.

An N-terminal signal peptide occupies residues 1-19 (MKKNIHILGASGVGTSTLG).

This is an uncharacterized protein from Bacillus subtilis (strain 168).